Reading from the N-terminus, the 102-residue chain is C-X-C motif chemokine 10 (102 aa).

A signal peptide spans Met1–Gly19. At Arg24 the chain carries Citrulline. 2 cysteine pairs are disulfide-bonded: Cys28/Cys55 and Cys30/Cys72.

Belongs to the intercrine alpha (chemokine CxC) family. Monomer, dimer, and tetramer. Interacts with CXCR3 (via N-terminus).

The protein resides in the secreted. Its function is as follows. Pro-inflammatory cytokine that is involved in a wide variety of processes such as chemotaxis, differentiation, and activation of peripheral immune cells, regulation of cell growth, apoptosis and modulation of angiostatic effects. Plays thereby an important role during viral infections by stimulating the activation and migration of immune cells to the infected sites. Mechanistically, binding of CXCL10 to the CXCR3 receptor activates G protein-mediated signaling and results in downstream activation of phospholipase C-dependent pathway, an increase in intracellular calcium production and actin reorganization. In turn, recruitment of activated Th1 lymphocytes occurs at sites of inflammation. Activation of the CXCL10/CXCR3 axis also plays an important role in neurons in response to brain injury for activating microglia, the resident macrophage population of the central nervous system, and directing them to the lesion site. This recruitment is an essential element for neuronal reorganization. This Bos taurus (Bovine) protein is C-X-C motif chemokine 10 (CXCL10).